The primary structure comprises 335 residues: Eukaryotic translation initiation factor 3 subunit H-A (335 aa).

Residues 22-156 form the MPN domain; the sequence is IQVDGLVVLK…LKAYRLTPKL (135 aa). Over residues 254 to 272 the composition is skewed to low complexity; it reads QQQKQQYQQRRQQENAQRQ. Residues 254-282 are disordered; it reads QQQKQQYQQRRQQENAQRQSRGEPPLPEE.

Belongs to the eIF-3 subunit H family. As to quaternary structure, component of the eukaryotic translation initiation factor 3 (eIF-3) complex, which is composed of 13 subunits: eif3a, eif3b, eif3c, eif3d, eif3e, eif3f, eif3g, eif3h, eif3i, eif3j, eif3k, eif3l and eif3m.

It localises to the cytoplasm. Functionally, component of the eukaryotic translation initiation factor 3 (eIF-3) complex, which is involved in protein synthesis of a specialized repertoire of mRNAs and, together with other initiation factors, stimulates binding of mRNA and methionyl-tRNAi to the 40S ribosome. The eIF-3 complex specifically targets and initiates translation of a subset of mRNAs involved in cell proliferation. The polypeptide is Eukaryotic translation initiation factor 3 subunit H-A (eif3ha) (Danio rerio (Zebrafish)).